The sequence spans 218 residues: N-(5'-phosphoribosyl)anthranilate isomerase (218 aa).

This sequence belongs to the TrpF family.

It catalyses the reaction N-(5-phospho-beta-D-ribosyl)anthranilate = 1-(2-carboxyphenylamino)-1-deoxy-D-ribulose 5-phosphate. Its pathway is amino-acid biosynthesis; L-tryptophan biosynthesis; L-tryptophan from chorismate: step 3/5. This Halalkalibacterium halodurans (strain ATCC BAA-125 / DSM 18197 / FERM 7344 / JCM 9153 / C-125) (Bacillus halodurans) protein is N-(5'-phosphoribosyl)anthranilate isomerase.